A 96-amino-acid chain; its full sequence is MSAVTRCEDGLVLRLYIQPKASRDCIVGLHGDEVKVAITAPPVDGQANSHLVKFLGKQFRVAKSQVAIEKGELGRHKQVKIIHPQQIPPEIAALTE.

It belongs to the UPF0235 family.

This chain is UPF0235 protein YggU, found in Salmonella arizonae (strain ATCC BAA-731 / CDC346-86 / RSK2980).